A 352-amino-acid chain; its full sequence is Anthranilate phosphoribosyltransferase (352 aa).

Residues glycine 83, 86–87 (GD), threonine 91, 93–96 (NIST), 111–119 (KHGGRSVSS), and alanine 123 each bind 5-phospho-alpha-D-ribose 1-diphosphate. Residue glycine 83 coordinates anthranilate. Residue serine 95 coordinates Mg(2+). Arginine 169 contacts anthranilate. Mg(2+) is bound by residues aspartate 228 and glutamate 229.

This sequence belongs to the anthranilate phosphoribosyltransferase family. Homodimer. It depends on Mg(2+) as a cofactor.

The enzyme catalyses N-(5-phospho-beta-D-ribosyl)anthranilate + diphosphate = 5-phospho-alpha-D-ribose 1-diphosphate + anthranilate. The protein operates within amino-acid biosynthesis; L-tryptophan biosynthesis; L-tryptophan from chorismate: step 2/5. In terms of biological role, catalyzes the transfer of the phosphoribosyl group of 5-phosphorylribose-1-pyrophosphate (PRPP) to anthranilate to yield N-(5'-phosphoribosyl)-anthranilate (PRA). This chain is Anthranilate phosphoribosyltransferase, found in Neisseria meningitidis serogroup C (strain 053442).